The sequence spans 396 residues: S-adenosylmethionine synthase (396 aa).

His-14 lines the ATP pocket. Residue Asp-16 coordinates Mg(2+). Residue Glu-42 coordinates K(+). Positions 55 and 98 each coordinate L-methionine. The interval 98 to 108 (QSPDIALGVNE) is flexible loop. Residues 174 to 176 (DGK), 241 to 242 (RF), Asp-250, 256 to 257 (RK), Ala-273, and Lys-277 contribute to the ATP site. An L-methionine-binding site is contributed by Asp-250. Lys-281 is a binding site for L-methionine.

Belongs to the AdoMet synthase family. Homotetramer; dimer of dimers. Mg(2+) serves as cofactor. Requires K(+) as cofactor.

The protein localises to the cytoplasm. The catalysed reaction is L-methionine + ATP + H2O = S-adenosyl-L-methionine + phosphate + diphosphate. It participates in amino-acid biosynthesis; S-adenosyl-L-methionine biosynthesis; S-adenosyl-L-methionine from L-methionine: step 1/1. Functionally, catalyzes the formation of S-adenosylmethionine (AdoMet) from methionine and ATP. The overall synthetic reaction is composed of two sequential steps, AdoMet formation and the subsequent tripolyphosphate hydrolysis which occurs prior to release of AdoMet from the enzyme. The sequence is that of S-adenosylmethionine synthase from Fervidobacterium nodosum (strain ATCC 35602 / DSM 5306 / Rt17-B1).